Consider the following 242-residue polypeptide: Immunity protein TsiV2 (242 aa).

Helical transmembrane passes span 39-59, 66-86, and 118-138; these read VFGAISAGIVPLWPFIFFADI, FWGFICFSLAGMAAARYLFMP, and FAWVGIAVCLLALAVVGPLAF.

The protein localises to the host membrane. Functionally, immunity protein that plays a role in preventing early activation of toxin VasX. The chain is Immunity protein TsiV2 from Vibrio cholerae serotype O1 (strain ATCC 39315 / El Tor Inaba N16961).